A 358-amino-acid polypeptide reads, in one-letter code: Alanine racemase (358 aa).

Lysine 35 functions as the Proton acceptor; specific for D-alanine in the catalytic mechanism. At lysine 35 the chain carries N6-(pyridoxal phosphate)lysine. Arginine 130 contacts substrate. The active-site Proton acceptor; specific for L-alanine is the tyrosine 255. Methionine 303 serves as a coordination point for substrate.

Belongs to the alanine racemase family. Pyridoxal 5'-phosphate is required as a cofactor.

The catalysed reaction is L-alanine = D-alanine. It participates in amino-acid biosynthesis; D-alanine biosynthesis; D-alanine from L-alanine: step 1/1. Functionally, catalyzes the interconversion of L-alanine and D-alanine. May also act on other amino acids. The chain is Alanine racemase (alr) from Shewanella baltica (strain OS155 / ATCC BAA-1091).